The primary structure comprises 61 residues: Large ribosomal subunit protein eL24 (61 aa).

Zn(2+)-binding residues include Cys7, Cys10, Cys33, and Cys37. The segment at 7–37 (CSFCGGDIPPATGMMHVRNDGTILWFCSNKC) adopts a C4-type zinc-finger fold.

This sequence belongs to the eukaryotic ribosomal protein eL24 family. Part of the 50S ribosomal subunit. Forms a cluster with proteins L3 and L14. Zn(2+) is required as a cofactor.

Functionally, binds to the 23S rRNA. The polypeptide is Large ribosomal subunit protein eL24 (Metallosphaera sedula (strain ATCC 51363 / DSM 5348 / JCM 9185 / NBRC 15509 / TH2)).